The chain runs to 261 residues: tRNA pseudouridine synthase A (261 aa).

Residue D51 is the Nucleophile of the active site. Y109 lines the substrate pocket.

This sequence belongs to the tRNA pseudouridine synthase TruA family. In terms of assembly, homodimer.

It carries out the reaction uridine(38/39/40) in tRNA = pseudouridine(38/39/40) in tRNA. Formation of pseudouridine at positions 38, 39 and 40 in the anticodon stem and loop of transfer RNAs. This Shewanella baltica (strain OS155 / ATCC BAA-1091) protein is tRNA pseudouridine synthase A.